The following is a 967-amino-acid chain: Cytosolic carboxypeptidase 2 (967 aa).

Positions 330-601 (YPYTYSDLQR…HFCDTLLDYC (272 aa)) constitute a Peptidase M14 domain. 3 residues coordinate Zn(2+): H396, E399, and H492. E565 acts as the Proton donor/acceptor in catalysis. 2 disordered regions span residues 679-706 (KRRL…LHEA) and 944-967 (PGIS…NTMK). The segment covering 946 to 967 (ISSSEPHFPNSSEDITVRNTMK) has biased composition (polar residues).

It belongs to the peptidase M14 family. Zn(2+) is required as a cofactor.

The protein localises to the cytoplasm. It is found in the cytosol. Its subcellular location is the cytoskeleton. The protein resides in the microtubule organizing center. It localises to the centrosome. The protein localises to the centriole. It is found in the cilium basal body. It catalyses the reaction (L-glutamyl)(n+1)-gamma-L-glutamyl-L-glutamyl-[protein] + H2O = (L-glutamyl)(n)-gamma-L-glutamyl-L-glutamyl-[protein] + L-glutamate. Functionally, metallocarboxypeptidase that mediates deglutamylation of target proteins. Catalyzes the deglutamylation of polyglutamate side chains generated by post-translational polyglutamylation in proteins such as tubulins. Also removes gene-encoded polyglutamates from the carboxy-terminus of target proteins such as MYLK. Does not show detyrosinase or deglycylase activities from the carboxy-terminus of tubulin. Its function is as follows. Metallocarboxypeptidase that mediates deglutamylation of tubulin and non-tubulin target proteins. Catalyzes the removal of polyglutamate side chains present on the gamma-carboxyl group of glutamate residues within the C-terminal tail of tubulin protein. Specifically cleaves tubulin long-side-chains, while it is not able to remove the branching point glutamate. Also catalyzes the removal of polyglutamate residues from the carboxy-terminus of non-tubulin proteins. The chain is Cytosolic carboxypeptidase 2 (agbl2) from Xenopus tropicalis (Western clawed frog).